Consider the following 87-residue polypeptide: Small ribosomal subunit protein bS20 (87 aa).

This sequence belongs to the bacterial ribosomal protein bS20 family.

Binds directly to 16S ribosomal RNA. The protein is Small ribosomal subunit protein bS20 of Shigella flexneri.